We begin with the raw amino-acid sequence, 382 residues long: Serine/arginine-rich splicing factor SR45a (382 aa).

Low complexity-rich tracts occupy residues 30 to 45 (PMSY…SLSP), 54 to 68 (VSRS…SVSS), 177 to 195 (PSYS…SRSY), and 202 to 219 (SYSP…YSPF). Disordered regions lie at residues 30-76 (PMSY…PGNS) and 150-382 (KARR…SVSP). The segment covering 288-316 (RARDRSCSPYYRGRDRSYSPHYQGRDRSY) has biased composition (basic and acidic residues). Positions 329–343 (VSGSVSPGGRSMSRS) are enriched in low complexity. A compositionally biased stretch (basic residues) spans 345 to 361 (SPRKGRKESRSKSRRHD). Positions 364–382 (SSMCHSRSARSSTSRSVSP) are enriched in low complexity.

The protein belongs to the splicing factor SR family. SR45 subfamily. Component of the spliceosome. Homodimer. Interacts with PRP38, SCL28, SR45, RNU1 and U2AF35B. Post-translationally, phosphorylated. In terms of tissue distribution, expressed in leaves, stems and roots.

It is found in the nucleus speckle. In terms of biological role, probable splicing factor involved in constitutive and/or alternative splicing events. May bridge the 5' and 3' components of the spliceosome. The chain is Serine/arginine-rich splicing factor SR45a (SR45A) from Arabidopsis thaliana (Mouse-ear cress).